A 76-amino-acid chain; its full sequence is uncharacterized protein (76 aa).

This is an uncharacterized protein from Homo sapiens (Human).